A 63-amino-acid polypeptide reads, in one-letter code: Large ribosomal subunit protein bL32 (63 aa).

This sequence belongs to the bacterial ribosomal protein bL32 family.

The chain is Large ribosomal subunit protein bL32 from Lacticaseibacillus paracasei (strain ATCC 334 / BCRC 17002 / CCUG 31169 / CIP 107868 / KCTC 3260 / NRRL B-441) (Lactobacillus paracasei).